Consider the following 338-residue polypeptide: Methionine synthase (338 aa).

H211, C213, and C294 together coordinate Zn(2+).

Belongs to the archaeal MetE family. The cofactor is Zn(2+).

It participates in amino-acid biosynthesis; L-methionine biosynthesis via de novo pathway. In terms of biological role, catalyzes the transfer of a methyl group to L-homocysteine resulting in methionine formation. The physiological methyl donor is unknown. The polypeptide is Methionine synthase (Sulfurisphaera tokodaii (strain DSM 16993 / JCM 10545 / NBRC 100140 / 7) (Sulfolobus tokodaii)).